Reading from the N-terminus, the 188-residue chain is Methylamine dehydrogenase light chain (188 aa).

The segment at residues 1 to 57 (MLGNFRFDDMVEKLSRRVAGRTSRRGAIGRLGTVLAGAALVPLLPVDRRGRVSRANA) is a signal peptide (tat-type signal). 6 cysteine pairs are disulfide-bonded: Cys-80/Cys-145, Cys-86/Cys-118, Cys-93/Cys-178, Cys-95/Cys-143, Cys-103/Cys-134, and Cys-135/Cys-166. Tryptophylquinone is present on Trp-114. A cross-link (tryptophan tryptophylquinone (Trp-Trp)) is located at residues 114-165 (WVASCYNPTDGQSYLIAYRDCCGYNVSGRCPCLNTEGELPVYRPEFANDIIW).

This sequence belongs to the aromatic amine dehydrogenase light chain family. Heterotetramer of two light and two heavy chains. Requires tryptophan tryptophylquinone residue as cofactor. Post-translationally, predicted to be exported by the Tat system. The position of the signal peptide cleavage has been experimentally proven. Tryptophan tryptophylquinone (TTQ) is formed by oxidation of the indole ring of a tryptophan to form tryptophylquinone followed by covalent cross-linking with another tryptophan residue.

It is found in the periplasm. The enzyme catalyses 2 oxidized [amicyanin] + methylamine + H2O = 2 reduced [amicyanin] + formaldehyde + NH4(+) + 2 H(+). It participates in one-carbon metabolism; methylamine degradation; formaldehyde from methylamine: step 1/1. Its function is as follows. Methylamine dehydrogenase carries out the oxidation of methylamine. Electrons are passed from methylamine dehydrogenase to amicyanin. This is Methylamine dehydrogenase light chain (mauA) from Paracoccus versutus (Thiobacillus versutus).